A 496-amino-acid chain; its full sequence is UDP-N-acetylmuramoyl-L-alanyl-D-glutamate--2,6-diaminopimelate ligase (496 aa).

Residues L24 and S26 each contribute to the UDP-N-acetyl-alpha-D-muramoyl-L-alanyl-D-glutamate site. 109–115 (GTNGKTS) is an ATP binding site. UDP-N-acetyl-alpha-D-muramoyl-L-alanyl-D-glutamate-binding positions include 151 to 152 (TT), S178, Q184, and R186. Residue K218 is modified to N6-carboxylysine. Meso-2,6-diaminopimelate-binding positions include R387, 411–414 (DNPR), G462, and E466. Positions 411-414 (DNPR) match the Meso-diaminopimelate recognition motif motif.

It belongs to the MurCDEF family. MurE subfamily. Mg(2+) serves as cofactor. Carboxylation is probably crucial for Mg(2+) binding and, consequently, for the gamma-phosphate positioning of ATP.

It is found in the cytoplasm. It catalyses the reaction UDP-N-acetyl-alpha-D-muramoyl-L-alanyl-D-glutamate + meso-2,6-diaminopimelate + ATP = UDP-N-acetyl-alpha-D-muramoyl-L-alanyl-gamma-D-glutamyl-meso-2,6-diaminopimelate + ADP + phosphate + H(+). It functions in the pathway cell wall biogenesis; peptidoglycan biosynthesis. Catalyzes the addition of meso-diaminopimelic acid to the nucleotide precursor UDP-N-acetylmuramoyl-L-alanyl-D-glutamate (UMAG) in the biosynthesis of bacterial cell-wall peptidoglycan. In Pseudomonas putida (strain ATCC 47054 / DSM 6125 / CFBP 8728 / NCIMB 11950 / KT2440), this protein is UDP-N-acetylmuramoyl-L-alanyl-D-glutamate--2,6-diaminopimelate ligase.